Here is a 183-residue protein sequence, read N- to C-terminus: ATP synthase subunit b, chloroplastic (183 aa).

A helical transmembrane segment spans residues 27-49 (LATNLINLTVVVGVLIYFGKGVL).

Belongs to the ATPase B chain family. F-type ATPases have 2 components, F(1) - the catalytic core - and F(0) - the membrane proton channel. F(1) has five subunits: alpha(3), beta(3), gamma(1), delta(1), epsilon(1). F(0) has four main subunits: a(1), b(1), b'(1) and c(10-14). The alpha and beta chains form an alternating ring which encloses part of the gamma chain. F(1) is attached to F(0) by a central stalk formed by the gamma and epsilon chains, while a peripheral stalk is formed by the delta, b and b' chains.

The protein localises to the plastid. It is found in the chloroplast thylakoid membrane. Functionally, f(1)F(0) ATP synthase produces ATP from ADP in the presence of a proton or sodium gradient. F-type ATPases consist of two structural domains, F(1) containing the extramembraneous catalytic core and F(0) containing the membrane proton channel, linked together by a central stalk and a peripheral stalk. During catalysis, ATP synthesis in the catalytic domain of F(1) is coupled via a rotary mechanism of the central stalk subunits to proton translocation. Component of the F(0) channel, it forms part of the peripheral stalk, linking F(1) to F(0). The protein is ATP synthase subunit b, chloroplastic of Oryza nivara (Indian wild rice).